The sequence spans 289 residues: Polyisoprenoid diphosphate/phosphate phosphohydrolase PLPP6 (289 aa).

Positions 1–81 are disordered; it reads MQSPRRNAEG…SSQALPPQLP (81 aa). At 1 to 126 the chain is on the cytoplasmic side; sequence MQSPRRNAEG…ESSSWGSMRP (126 aa). 3 positions are modified to phosphoserine: serine 23, serine 30, and serine 64. Residues 127-147 form a helical membrane-spanning segment; that stretch reads LMKLLEISGHGIPWLLGTLYC. Over 148–158 the chain is Lumenal; it reads LSRSDSWAGRE. Residues 159-179 traverse the membrane as a helical segment; that stretch reads VLMNLLFALLLDLLLVSLIKG. The tract at residues 178 to 186 is phosphatase sequence motif I; it reads KGLVRRRRP. Over 180 to 222 the chain is Cytoplasmic; it reads LVRRRRPAHNQMDMFFTISVDKYSFPSGHTTRAALVSRFILNH. The phosphatase sequence motif II stretch occupies residues 205–208; that stretch reads PSGH. Histidine 208 acts as the Proton donors in catalysis. Residues 223–243 traverse the membrane as a helical segment; it reads LVLAIPLRVLVVLWAFILGLS. The segment at 243–254 is phosphatase sequence motif III; sequence SRVMLGRHNVTD. Residues 244–254 lie on the Lumenal side of the membrane; that stretch reads RVMLGRHNVTD. The Nucleophile role is filled by histidine 250. The helical transmembrane segment at 255–275 threads the bilayer; it reads VAFGFFLGYMQYSIVDYCWLS. The Cytoplasmic portion of the chain corresponds to 276–289; sequence PRTAPVLFVLWNQP.

Belongs to the PA-phosphatase related phosphoesterase family. In terms of processing, phosphorylation by PKC activates the phosphatase activity towards presqualene diphosphate.

The protein resides in the endoplasmic reticulum membrane. Its subcellular location is the nucleus envelope. It localises to the nucleus inner membrane. The catalysed reaction is presqualene diphosphate + H2O = presqualene phosphate + phosphate + H(+). It catalyses the reaction presqualene phosphate + H2O = presqualene alcohol + phosphate. The enzyme catalyses (2E,6E)-farnesyl diphosphate + H2O = (2E,6E)-farnesyl phosphate + phosphate + H(+). It carries out the reaction (2E,6E)-farnesyl phosphate + H2O = (2E,6E)-farnesol + phosphate. The catalysed reaction is (2E,6E,10E)-geranylgeranyl diphosphate + H2O = (2E,6E,10E)-geranylgeranyl phosphate + phosphate + H(+). It catalyses the reaction (2E,6E,10E)-geranylgeranyl phosphate + H2O = (2E,6E,10E)-geranylgeraniol + phosphate. The enzyme catalyses (2E)-geranyl diphosphate + H2O = (2E)-geranyl phosphate + phosphate + H(+). It carries out the reaction (2E)-geranyl phosphate + H2O = (2E)-geraniol + phosphate. The catalysed reaction is 1,2-dihexadecanoyl-sn-glycero-3-phosphate + H2O = 1,2-dihexadecanoyl-sn-glycerol + phosphate. Magnesium-independent polyisoprenoid diphosphatase that catalyzes the sequential dephosphorylation of presqualene, farnesyl, geranyl and geranylgeranyl diphosphates. Functions in the innate immune response through the dephosphorylation of presqualene diphosphate which acts as a potent inhibitor of the signaling pathways contributing to polymorphonuclear neutrophils activation. May regulate the biosynthesis of cholesterol and related sterols by dephosphorylating presqualene and farnesyl diphosphate, two key intermediates in this biosynthetic pathway. May also play a role in protein prenylation by acting on farnesyl diphosphate and its derivative geranylgeranyl diphosphate, two precursors for the addition of isoprenoid anchors to membrane proteins. Has a lower activity towards phosphatidic acid (PA), but through phosphatidic acid dephosphorylation may participate in the biosynthesis of phospholipids and triacylglycerols. May also act on ceramide-1-P, lysophosphatidic acid (LPA) and sphing-4-enine 1-phosphate/sphingosine-1-phosphate. This Bos taurus (Bovine) protein is Polyisoprenoid diphosphate/phosphate phosphohydrolase PLPP6.